We begin with the raw amino-acid sequence, 477 residues long: Proton-coupled amino acid transporter 3 (477 aa).

Over 1–54 (MGNVPLLREVGKCQRNMFGRSTASSKGSSNSRSSSSTSPKKGPRREADALMFIQ) the chain is Cytoplasmic. Residues 19–40 (GRSTASSKGSSNSRSSSSTSPK) show a composition bias toward low complexity. The tract at residues 19–43 (GRSTASSKGSSNSRSSSSTSPKKGP) is disordered. The chain crosses the membrane as a helical span at residues 55–75 (IFIHLLKSNIGTGFLGLPLAV). At 76-77 (KN) the chain is on the extracellular side. A helical transmembrane segment spans residues 78–98 (AGLLVGPVSLLAIGALTVHCM). The Cytoplasmic segment spans residues 99-144 (DILLNCACHLTQRLQRSFVNYEETTMYSLETCPSPWLRTHSVWGRY). Residues 145–165 (VVSFLLIVTQLGFCSVYFMFL) form a helical membrane-spanning segment. The Extracellular segment spans residues 166–202 (ADNLQQIMEEAHFTSNVCQPRQSLVMTSILDTRFYML). The chain crosses the membrane as a helical span at residues 203 to 223 (TILPFLILLVLIQNPQVLSIF). At 224–225 (ST) the chain is on the cytoplasmic side. A helical transmembrane segment spans residues 226-246 (LATITTLSSLALIFEYLIQTP). Residues 247-259 (HHSNLPLVANWKT) lie on the Extracellular side of the membrane. Residues 260–280 (FLLFFGTAIFTFEGVGMVLPL) traverse the membrane as a helical segment. The Cytoplasmic portion of the chain corresponds to 281 to 291 (KSQMKSPQQFP). A helical membrane pass occupies residues 292-312 (AVLYLGMSFVIFLYICLGTLG). The Extracellular segment spans residues 313–344 (YMKFGTDTQASITLNLPICWLYQSVKLMYSVG). A helical membrane pass occupies residues 345-365 (IFFTYALQFHVPAEIIVPYVV). The Cytoplasmic segment spans residues 366 to 374 (SRVSENWAL). Residues 375–395 (FVDLTVRTALVCLTCFSAVLI) form a helical membrane-spanning segment. Residues 396 to 399 (PRLD) lie on the Extracellular side of the membrane. A helical membrane pass occupies residues 400-420 (LVISLVGSVSSSALAIIIPPL). Residues 421-432 (LEIATFYSENIS) are Cytoplasmic-facing. The chain crosses the membrane as a helical span at residues 433-453 (CATIVKDIMISILGLLGCVLG). Over 454–477 (TYQALYEMTQQTHFYMANSTRVHI) the chain is Extracellular.

The protein belongs to the amino acid/polyamine transporter 2 family. As to expression, specifically expressed in testis.

The protein resides in the membrane. This is Proton-coupled amino acid transporter 3 (Slc36a3) from Mus musculus (Mouse).